We begin with the raw amino-acid sequence, 152 residues long: MDQTTRTVQAQKHIALVAHDHCKTSLMQWVAIHKEKLQHHILYATGTTGHLVQRATGLPVTAMMSGPMGGDQQVGALISEGRIDLLIFFWDPLNAVPHDPDVKALLRLATVWNIPVATNRTTADFIIHSPLFDRQVEIEIPDYQLYLQQRLK.

Residues 5-152 (TRTVQAQKHI…YQLYLQQRLK (148 aa)) form the MGS-like domain. Substrate is bound by residues histidine 19, lysine 23, 45–48 (TGTT), and 65–66 (SG). Aspartate 71 (proton donor/acceptor) is an active-site residue. Position 98 (histidine 98) interacts with substrate.

This sequence belongs to the methylglyoxal synthase family.

The catalysed reaction is dihydroxyacetone phosphate = methylglyoxal + phosphate. Functionally, catalyzes the formation of methylglyoxal from dihydroxyacetone phosphate. The chain is Methylglyoxal synthase from Erwinia tasmaniensis (strain DSM 17950 / CFBP 7177 / CIP 109463 / NCPPB 4357 / Et1/99).